A 333-amino-acid polypeptide reads, in one-letter code: Olfactory receptor 9S13 (333 aa).

Over 1-35 the chain is Extracellular; sequence MATAVHRNGSLTPVSLRVFVLVGFGGGALTQALLF. An N-linked (GlcNAc...) asparagine glycan is attached at asparagine 8. A helical transmembrane segment spans residues 36 to 56; that stretch reads AVFLVLYVVTVLGNLTMIVVI. The Cytoplasmic segment spans residues 57 to 72; that stretch reads TLDARLHSPMYFFLKN. The chain crosses the membrane as a helical span at residues 73–93; the sequence is LSFVDLCYSSAIAPNALANFL. Residues 94-106 are Extracellular-facing; the sequence is STSKVISFEACAT. Cysteine 104 and cysteine 196 are joined by a disulfide. A helical membrane pass occupies residues 107–127; it reads QFFFFSLLATTETFLLAVMAY. The Cytoplasmic segment spans residues 128-150; it reads DRFMAICSPLRYPVTMCPTTCTR. Residues 151–171 form a helical membrane-spanning segment; the sequence is LVLGTFCVGCLNSIVQTSLTF. Residues 172-203 are Extracellular-facing; that stretch reads QLPFCSSNRIDHFYCDVPPLLQLACASTALNE. Residues 204-224 form a helical membrane-spanning segment; the sequence is LFLFGLCGFIIVSTTLAVLVS. Topologically, residues 225-251 are cytoplasmic; sequence YGYITVTILRMHSGSGRHKVFSTCGSH. A helical transmembrane segment spans residues 252 to 272; that stretch reads LTAVSLFYGTLFVMYAQPGAL. The Extracellular portion of the chain corresponds to 273-278; it reads TSMEQG. A helical transmembrane segment spans residues 279–299; that stretch reads KVVSIFYTLVIPMLNPLIYSL. Over 300-333 the chain is Cytoplasmic; it reads RNKDVKDALQRLGQRHSLVKAVRGCPAAGGNASV.

It belongs to the G-protein coupled receptor 1 family.

It is found in the cell membrane. Functionally, odorant receptor. The protein is Olfactory receptor 9S13 of Mus musculus (Mouse).